The primary structure comprises 329 residues: Holliday junction branch migration complex subunit RuvB (329 aa).

The tract at residues 1–180 is large ATPase domain (RuvB-L); sequence MKNILQSTEC…FGIPIHLEFY (180 aa). Residues Arg-20, Gly-61, Lys-64, Thr-65, Thr-66, 127–129, Arg-170, Tyr-180, and Arg-217 each bind ATP; that span reads EDF. Mg(2+) is bound at residue Thr-65. The tract at residues 181 to 252 is small ATPAse domain (RuvB-S); it reads STEELTKVIQ…FADKALLRLG (72 aa). Positions 255-329 are head domain (RuvB-H); it reads KLGLDRQDIQ…ISHLREQEYI (75 aa). The DNA site is built by Arg-308 and Arg-313.

It belongs to the RuvB family. In terms of assembly, homohexamer. Forms an RuvA(8)-RuvB(12)-Holliday junction (HJ) complex. HJ DNA is sandwiched between 2 RuvA tetramers; dsDNA enters through RuvA and exits via RuvB. An RuvB hexamer assembles on each DNA strand where it exits the tetramer. Each RuvB hexamer is contacted by two RuvA subunits (via domain III) on 2 adjacent RuvB subunits; this complex drives branch migration. In the full resolvosome a probable DNA-RuvA(4)-RuvB(12)-RuvC(2) complex forms which resolves the HJ.

It localises to the cytoplasm. It carries out the reaction ATP + H2O = ADP + phosphate + H(+). Functionally, the RuvA-RuvB-RuvC complex processes Holliday junction (HJ) DNA during genetic recombination and DNA repair, while the RuvA-RuvB complex plays an important role in the rescue of blocked DNA replication forks via replication fork reversal (RFR). RuvA specifically binds to HJ cruciform DNA, conferring on it an open structure. The RuvB hexamer acts as an ATP-dependent pump, pulling dsDNA into and through the RuvAB complex. RuvB forms 2 homohexamers on either side of HJ DNA bound by 1 or 2 RuvA tetramers; 4 subunits per hexamer contact DNA at a time. Coordinated motions by a converter formed by DNA-disengaged RuvB subunits stimulates ATP hydrolysis and nucleotide exchange. Immobilization of the converter enables RuvB to convert the ATP-contained energy into a lever motion, pulling 2 nucleotides of DNA out of the RuvA tetramer per ATP hydrolyzed, thus driving DNA branch migration. The RuvB motors rotate together with the DNA substrate, which together with the progressing nucleotide cycle form the mechanistic basis for DNA recombination by continuous HJ branch migration. Branch migration allows RuvC to scan DNA until it finds its consensus sequence, where it cleaves and resolves cruciform DNA. This Ehrlichia chaffeensis (strain ATCC CRL-10679 / Arkansas) protein is Holliday junction branch migration complex subunit RuvB.